A 1154-amino-acid chain; its full sequence is Kinesin-like protein KIN-7E, chloroplastic (1154 aa).

Low complexity-rich tracts occupy residues 1 to 14 (MSSS…SISP) and 29 to 109 (VAAA…PPVA). The transit peptide at 1 to 21 (MSSSSRPGRASISPFRSRRTS) directs the protein to the chloroplast. The disordered stretch occupies residues 1–109 (MSSSSRPGRA…RAAGRAPPVA (109 aa)). Positions 119-437 (NIMVTVRFRP…LKFAHRSKHI (319 aa)) constitute a Kinesin motor domain. An ATP-binding site is contributed by 199-206 (GVTSSGKT). Positions 441–523 (ASQNKIIDEK…AALMGRIQRL (83 aa)) form a coiled coil. The interval 620 to 674 (LSTSVDSESTASGSPSFSRSSQQKHPLLDLKDGRRKSMTRKGDDPALTDSFPGRT) is disordered. A compositionally biased stretch (low complexity) spans 628–640 (STASGSPSFSRSS). 2 coiled-coil regions span residues 734 to 761 (DSQI…LEQR) and 801 to 845 (ADNR…DNVA). The disordered stretch occupies residues 838–885 (AKNEDNVASMQSSEPSSTSSNPRDLANEVASHSKMPSRTTEDHTESPL). Residues 846 to 857 (SMQSSEPSSTSS) show a composition bias toward low complexity. The stretch at 894-967 (AEIENLKLDK…DLAAAKDQTR (74 aa)) forms a coiled coil.

This sequence belongs to the TRAFAC class myosin-kinesin ATPase superfamily. Kinesin family. KIN-7 subfamily.

It is found in the plastid. The protein localises to the chloroplast. The polypeptide is Kinesin-like protein KIN-7E, chloroplastic (Oryza sativa subsp. japonica (Rice)).